Reading from the N-terminus, the 86-residue chain is MRCSVLFVVSYVIMSLLISHVQGMEDQKWKKVCNLEGNFPGRCVGNGDEQCKRDLTEDGNNPSKCRCRFRAGRRHCRCIYCEVFGM.

The first 23 residues, 1-23 (MRCSVLFVVSYVIMSLLISHVQG), serve as a signal peptide directing secretion. 4 disulfides stabilise this stretch: C33-C81, C43-C67, C51-C76, and C65-C78.

The protein belongs to the DEFL family. In terms of tissue distribution, expressed specifically in anthers.

It is found in the secreted. Involved in self-incompatibility. The protein is Defensin-like protein a (SCRa) of Arabidopsis lyrata (Lyre-leaved rock-cress).